Reading from the N-terminus, the 163-residue chain is ATP synthase subunit delta, mitochondrial (163 aa).

Residues 1–18 (MLARTIQRFSVVAKRGYA) constitute a mitochondrion transit peptide.

It belongs to the ATPase epsilon chain family. In terms of assembly, subunit of the F-type ATPase which has 2 components, CF(1) - the catalytic core - and CF(0) - the membrane proton channel.

The protein resides in the mitochondrion. The protein localises to the mitochondrion inner membrane. Mitochondrial membrane ATP synthase (F(1)F(0) ATP synthase or Complex V) produces ATP from ADP in the presence of a proton gradient across the membrane which is generated by electron transport complexes of the respiratory chain. F-type ATPases consist of two structural domains, F(1) - containing the extramembraneous catalytic core, and F(0) - containing the membrane proton channel, linked together by a central stalk and a peripheral stalk. During catalysis, ATP turnover in the catalytic domain of F(1) is coupled via a rotary mechanism of the central stalk subunits to proton translocation. Part of the complex F(1) domain and of the central stalk which is part of the complex rotary element. This Caenorhabditis elegans protein is ATP synthase subunit delta, mitochondrial.